Reading from the N-terminus, the 272-residue chain is Tryptophan synthase alpha chain (272 aa).

Residues Glu49 and Asp60 each act as proton acceptor in the active site.

Belongs to the TrpA family. Tetramer of two alpha and two beta chains.

The enzyme catalyses (1S,2R)-1-C-(indol-3-yl)glycerol 3-phosphate + L-serine = D-glyceraldehyde 3-phosphate + L-tryptophan + H2O. It functions in the pathway amino-acid biosynthesis; L-tryptophan biosynthesis; L-tryptophan from chorismate: step 5/5. Its function is as follows. The alpha subunit is responsible for the aldol cleavage of indoleglycerol phosphate to indole and glyceraldehyde 3-phosphate. The polypeptide is Tryptophan synthase alpha chain (Polaromonas naphthalenivorans (strain CJ2)).